A 440-amino-acid chain; its full sequence is ATP-dependent protease ATPase subunit HslU (440 aa).

Residues Val18, 60–65 (GVGKTE), Asp253, Glu318, and Arg390 contribute to the ATP site.

It belongs to the ClpX chaperone family. HslU subfamily. In terms of assembly, a double ring-shaped homohexamer of HslV is capped on each side by a ring-shaped HslU homohexamer. The assembly of the HslU/HslV complex is dependent on binding of ATP.

Its subcellular location is the cytoplasm. ATPase subunit of a proteasome-like degradation complex; this subunit has chaperone activity. The binding of ATP and its subsequent hydrolysis by HslU are essential for unfolding of protein substrates subsequently hydrolyzed by HslV. HslU recognizes the N-terminal part of its protein substrates and unfolds these before they are guided to HslV for hydrolysis. The sequence is that of ATP-dependent protease ATPase subunit HslU from Methylococcus capsulatus (strain ATCC 33009 / NCIMB 11132 / Bath).